A 212-amino-acid chain; its full sequence is Pyridoxine/pyridoxamine 5'-phosphate oxidase (212 aa).

Residues 8-11 (RTNY) and Lys66 each bind substrate. Residues 61–66 (RIVLLK), 76–77 (FT), Lys83, and Gln105 contribute to the FMN site. Tyr123, Arg127, and Ser131 together coordinate substrate. FMN contacts are provided by residues 140-141 (QS) and Trp185. 191 to 193 (RLH) serves as a coordination point for substrate. Arg195 is an FMN binding site.

This sequence belongs to the pyridoxamine 5'-phosphate oxidase family. Homodimer. It depends on FMN as a cofactor.

It carries out the reaction pyridoxamine 5'-phosphate + O2 + H2O = pyridoxal 5'-phosphate + H2O2 + NH4(+). The enzyme catalyses pyridoxine 5'-phosphate + O2 = pyridoxal 5'-phosphate + H2O2. It functions in the pathway cofactor metabolism; pyridoxal 5'-phosphate salvage; pyridoxal 5'-phosphate from pyridoxamine 5'-phosphate: step 1/1. Its pathway is cofactor metabolism; pyridoxal 5'-phosphate salvage; pyridoxal 5'-phosphate from pyridoxine 5'-phosphate: step 1/1. In terms of biological role, catalyzes the oxidation of either pyridoxine 5'-phosphate (PNP) or pyridoxamine 5'-phosphate (PMP) into pyridoxal 5'-phosphate (PLP). This chain is Pyridoxine/pyridoxamine 5'-phosphate oxidase, found in Leptospira biflexa serovar Patoc (strain Patoc 1 / Ames).